A 307-amino-acid chain; its full sequence is HTH-type transcriptional regulator DmlR (307 aa).

The 58-residue stretch at 5 to 62 (PLLNDLRVFMLVARRAGFAAVAEELGVSPAFVSKRIALLEQTLNVVLLHRTTRRVTIT) folds into the HTH lysR-type domain. A DNA-binding region (H-T-H motif) is located at residues 22 to 41 (FAAVAEELGVSPAFVSKRIA).

The protein belongs to the LysR transcriptional regulatory family.

Functionally, transcriptional regulator required for the aerobic growth on D-malate as the sole carbon source. Induces the expression of dmlA in response to D-malate or L- or meso-tartrate. Negatively regulates its own expression. The sequence is that of HTH-type transcriptional regulator DmlR (dmlR) from Escherichia coli (strain K12).